Here is a 331-residue protein sequence, read N- to C-terminus: UPF0324 membrane protein SAR0338 (331 aa).

The next 11 membrane-spanning stretches (helical) occupy residues 9–26 (FMIG…SFLA), 31–48 (ILDK…AILY), 69–88 (LLRF…DIIG), 93–115 (LLAI…NKLL), 122–144 (ALLL…APIF), 154–176 (SIGI…YAIF), 183–202 (YGAW…LAGG), 217–234 (LGRV…ILIM), 247–269 (ISIP…VTIP), 273–295 (LNIL…GLNV), and 308–330 (LMTI…HWLY).

The protein belongs to the UPF0324 family.

Its subcellular location is the cell membrane. In Staphylococcus aureus (strain MRSA252), this protein is UPF0324 membrane protein SAR0338.